Here is a 132-residue protein sequence, read N- to C-terminus: ATP synthase epsilon chain (132 aa).

This sequence belongs to the ATPase epsilon chain family. In terms of assembly, F-type ATPases have 2 components, CF(1) - the catalytic core - and CF(0) - the membrane proton channel. CF(1) has five subunits: alpha(3), beta(3), gamma(1), delta(1), epsilon(1). CF(0) has three main subunits: a, b and c.

The protein resides in the cell membrane. Produces ATP from ADP in the presence of a proton gradient across the membrane. This is ATP synthase epsilon chain (atpC) from Geobacillus stearothermophilus (Bacillus stearothermophilus).